Reading from the N-terminus, the 513-residue chain is Putative ribose/galactose/methyl galactoside import ATP-binding protein 2 (513 aa).

ABC transporter domains are found at residues 24–260 (LTAE…VGRE) and 270–510 (VPIG…VMEL). An ATP-binding site is contributed by 56–63 (GENGAGKS).

This sequence belongs to the ABC transporter superfamily. Carbohydrate importer 2 (CUT2) (TC 3.A.1.2) family.

The protein localises to the cell inner membrane. It catalyses the reaction D-ribose(out) + ATP + H2O = D-ribose(in) + ADP + phosphate + H(+). The enzyme catalyses D-galactose(out) + ATP + H2O = D-galactose(in) + ADP + phosphate + H(+). Its function is as follows. Part of an ABC transporter complex involved in carbohydrate import. Could be involved in ribose, galactose and/or methyl galactoside import. Responsible for energy coupling to the transport system. The sequence is that of Putative ribose/galactose/methyl galactoside import ATP-binding protein 2 from Rhizobium meliloti (strain 1021) (Ensifer meliloti).